The sequence spans 99 residues: Prostate and testis expressed protein 4 (99 aa).

The first 23 residues, 1 to 23, serve as a signal peptide directing secretion; the sequence is MNSVTKISTLLIVILSFLCFVEG. Positions 24 to 99 constitute a UPAR/Ly6 domain; sequence LICNSCEKSR…CCEKNLCNSF (76 aa). Intrachain disulfides connect C26–C52, C29–C37, C44–C70, and C74–C90.

In terms of tissue distribution, expressed in prostate, testis, eye, kidney and skeletal muscle. Expressed in the dorsal lobe of prostate. Not expressed in the ventral lobe of prostate.

It localises to the secreted. In terms of biological role, enhances sperm motility. Binds to calmodulin and inhibits calcium transport into spermatozoa. May modulate the function of nicotinic acetylcholine receptors. The polypeptide is Prostate and testis expressed protein 4 (Pate4) (Mus musculus (Mouse)).